Reading from the N-terminus, the 347-residue chain is KRR1 small subunit processome component homolog (347 aa).

The 71-residue stretch at 124–194 folds into the KH domain; it reads GCDIIKIGNL…VRDIVLETMN (71 aa). A compositionally biased stretch (basic residues) spans 231–246; that stretch reads NKNLSKRKQPKVKKPK. A disordered region spans residues 231 to 347; sequence NKNLSKRKQP…LLKANKKSKS (117 aa). The stretch at 271–304 forms a coiled coil; that stretch reads FLNKEQKQAKRQQERQTKQAEAAKKQDERRNKDF. Composition is skewed to basic and acidic residues over residues 272–303 and 318–329; these read LNKE…RNKD and KANDNDSSDSRV. Basic residues predominate over residues 337–347; sequence KLLKANKKSKS.

Belongs to the KRR1 family. As to quaternary structure, monomer. Component of the ribosomal small subunit (SSU) processome.

It is found in the nucleus. Its subcellular location is the nucleolus. Its function is as follows. Required for 40S ribosome biogenesis. Involved in nucleolar processing of pre-18S ribosomal RNA and ribosome assembly. Binds to RNA. Required for female germline development, cell viability during eye development and for survival of dividing cells and epithelial cells during early wing disk development. The protein is KRR1 small subunit processome component homolog of Drosophila willistoni (Fruit fly).